Here is a 357-residue protein sequence, read N- to C-terminus: Arginine kinase (357 aa).

The Phosphagen kinase N-terminal domain occupies 9–91 (KLEAGFKKLQ…FDPIIDDYHG (83 aa)). 64–68 (GVGIY) is a binding site for substrate. Residues 119-356 (FIISTRVRCG…LEMIKMEKAA (238 aa)) form the Phosphagen kinase C-terminal domain. Residues 122–126 (STRVR) and H185 each bind ATP. E225 is a binding site for substrate. Residue R229 coordinates ATP. C271 contacts substrate. Residues 280 to 284 (RASVH) and 309 to 314 (RGTRGE) each bind ATP. Substrate is bound at residue E314.

This sequence belongs to the ATP:guanido phosphotransferase family. As to quaternary structure, monomer.

The protein localises to the cytoplasm. The enzyme catalyses L-arginine + ATP = N(omega)-phospho-L-arginine + ADP + H(+). Catalyzes the reversible transfer of the terminal phosphoryl group of ATP to L-arginine. The sequence is that of Arginine kinase from Limulus polyphemus (Atlantic horseshoe crab).